The following is a 360-amino-acid chain: DNA replication and repair protein RecF (360 aa).

30-37 (GVNGAGKT) is an ATP binding site.

The protein belongs to the RecF family.

It localises to the cytoplasm. Functionally, the RecF protein is involved in DNA metabolism; it is required for DNA replication and normal SOS inducibility. RecF binds preferentially to single-stranded, linear DNA. It also seems to bind ATP. This is DNA replication and repair protein RecF from Thioalkalivibrio sulfidiphilus (strain HL-EbGR7).